Here is a 314-residue protein sequence, read N- to C-terminus: E3 ubiquitin-protein ligase SINA-like 11 (314 aa).

A compositionally biased stretch (polar residues) spans 1 to 12 (MEDSNSHPQNQT). The interval 1–31 (MEDSNSHPQNQTSKRKSSHPQKKQRMENETR) is disordered. Residues 13-23 (SKRKSSHPQKK) are compositionally biased toward basic residues. An RING-type; degenerate zinc finger spans residues 43 to 81 (CPVCFEPLTIPTFQCDDGHIVCNFCFAKVSNKCPGPGCD). The SBD stretch occupies residues 95–280 (VLESAFVPCQ…PANEVQQVTI (186 aa)). Residues 98–156 (SAFVPCQNTEFGCTKSVSYEKVSSHEKECNYSQCSCPNLECNYTGSYNIIYGHFMRRHL) form an SIAH-type zinc finger. Cysteine 103, cysteine 110, histidine 122, cysteine 126, cysteine 133, cysteine 138, histidine 150, and histidine 155 together coordinate Zn(2+).

This sequence belongs to the SINA (Seven in absentia) family.

It carries out the reaction S-ubiquitinyl-[E2 ubiquitin-conjugating enzyme]-L-cysteine + [acceptor protein]-L-lysine = [E2 ubiquitin-conjugating enzyme]-L-cysteine + N(6)-ubiquitinyl-[acceptor protein]-L-lysine.. It functions in the pathway protein modification; protein ubiquitination. Functionally, E3 ubiquitin-protein ligase that mediates ubiquitination and subsequent proteasomal degradation of target proteins. E3 ubiquitin ligases accept ubiquitin from an E2 ubiquitin-conjugating enzyme in the form of a thioester and then directly transfers the ubiquitin to targeted substrates. It probably triggers the ubiquitin-mediated degradation of different substrates. This Arabidopsis thaliana (Mouse-ear cress) protein is E3 ubiquitin-protein ligase SINA-like 11.